We begin with the raw amino-acid sequence, 411 residues long: Exodeoxyribonuclease 7 large subunit (411 aa).

The protein belongs to the XseA family. Heterooligomer composed of large and small subunits.

Its subcellular location is the cytoplasm. It catalyses the reaction Exonucleolytic cleavage in either 5'- to 3'- or 3'- to 5'-direction to yield nucleoside 5'-phosphates.. Its function is as follows. Bidirectionally degrades single-stranded DNA into large acid-insoluble oligonucleotides, which are then degraded further into small acid-soluble oligonucleotides. The protein is Exodeoxyribonuclease 7 large subunit of Mycobacterium sp. (strain KMS).